The primary structure comprises 396 residues: S-adenosylmethionine synthase (396 aa).

Histidine 15 provides a ligand contact to ATP. Aspartate 17 is a Mg(2+) binding site. Glutamate 43 provides a ligand contact to K(+). L-methionine is bound by residues glutamate 56 and glutamine 99. Residues 99-109 (QSPDIALGVNR) are flexible loop. ATP-binding positions include 175–177 (DGK), 241–242 (RF), aspartate 250, 256–257 (RK), alanine 273, and lysine 277. Residue aspartate 250 participates in L-methionine binding. Position 281 (lysine 281) interacts with L-methionine.

The protein belongs to the AdoMet synthase family. Homotetramer; dimer of dimers. Requires Mg(2+) as cofactor. K(+) serves as cofactor.

Its subcellular location is the cytoplasm. It catalyses the reaction L-methionine + ATP + H2O = S-adenosyl-L-methionine + phosphate + diphosphate. It participates in amino-acid biosynthesis; S-adenosyl-L-methionine biosynthesis; S-adenosyl-L-methionine from L-methionine: step 1/1. Its function is as follows. Catalyzes the formation of S-adenosylmethionine (AdoMet) from methionine and ATP. The overall synthetic reaction is composed of two sequential steps, AdoMet formation and the subsequent tripolyphosphate hydrolysis which occurs prior to release of AdoMet from the enzyme. This chain is S-adenosylmethionine synthase, found in Carboxydothermus hydrogenoformans (strain ATCC BAA-161 / DSM 6008 / Z-2901).